The following is a 90-amino-acid chain: UPF0297 protein lwe1516 (90 aa).

It belongs to the UPF0297 family.

The chain is UPF0297 protein lwe1516 from Listeria welshimeri serovar 6b (strain ATCC 35897 / DSM 20650 / CCUG 15529 / CIP 8149 / NCTC 11857 / SLCC 5334 / V8).